Consider the following 508-residue polypeptide: Immunoglobulin G-binding protein A (508 aa).

A signal peptide spans 1–36 (MKKKNIYSIRKLGVGIASVTLGTLLISGGVTPAANA). The short motif at 7–18 (YSIRKLGVGIAS) is the YSIRK-G/S signaling motif element. Residues 37–92 (AQHDEAQQNAFYQVLNMPNLNADQRNGFIQSLKDDPSQSANVLGEAQKLNDSQAPK) form an Immunoglobulin-binding region E repeat. The Immunoglobulin-binding region D repeat unit spans residues 93-153 (ADAQQNKFNK…KKLNESQAPK (61 aa)). Residues 154–211 (ADNNFNKEQQNAFYEILNMPNLNEEQRNGFIQSLKDDPSQSANLLAEAKKLNESQAPK) form an Immunoglobulin-binding region A repeat. The stretch at 212 to 269 (ADNKFNKEQQNAFYEILHLPNLNEEQRNGFIQSLKDDPSQSANLLAEAKKLNDAQAPK) is one Immunoglobulin-binding region B repeat. An Immunoglobulin-binding region C repeat occupies 270-327 (ADNKFNKEQQNAFYEILHLPNLTEEQRNGFIQSLKDDPSVSKEILAEAKKLNDAQAPK). Over residues 318 to 412 (KKLNDAQAPK…GNKPGKEDGN (95 aa)) the composition is skewed to basic and acidic residues. Disordered regions lie at residues 318–424 (KKLN…DTVN) and 459–479 (KKQPANHADANKAQALPETGE). 12 tandem repeats follow at residues 333-340 (KPGKEDGN), 341-348 (KPGKEDGN), 349-356 (KPGKEDNK), 357-364 (KPGKEDGN), 365-372 (KPGKEDNK), 373-380 (KPGKEDGN), 381-388 (KPGKEDGN), 389-396 (KPGKEDGN), 397-405 (KPGKEDGNK), 406-413 (PGKEDGNG), 414-421 (VHVVKPGD), and 422-429 (TVNDIAKA). The tract at residues 333-408 (KPGKEDGNKP…GKEDGNKPGK (76 aa)) is 12 X 8 AA approximate tandem repeats. Positions 413–457 (GVHVVKPGDTVNDIAKANGTTADKIAADNKLADKNMIKPGQELVV) constitute a LysM domain. The LPXTG sorting signal signature appears at 474 to 478 (LPETG). A Pentaglycyl murein peptidoglycan amidated threonine modification is found at Thr-477. The propeptide at 478-508 (GEENPFIGTTVFGGLSLALGAALLAGRRREL) is removed by sortase.

It belongs to the immunoglobulin-binding protein SpA family. Interacts with host TNFRSF1A; this interaction leads to the stimulation of both surface expression and shedding of TNFRSF1A.

It is found in the secreted. The protein localises to the cell wall. Its function is as follows. Plays a role in the inhibition of the host innate and adaptive immune responses. Possesses five immunoglobulin-binding domains that capture both the fragment crystallizable region (Fc region) and the Fab region (part of Ig that identifies antigen) of immunoglobulins. In turn, Staphylococcus aureus is protected from phagocytic killing via inhibition of Ig Fc region. In addition, the host elicited B-cell response is prevented due to a decrease of antibody-secreting cell proliferation that enter the bone marrow, thereby decreasing long-term antibody production. Inhibits osteogenesis by preventing osteoblast proliferation and expression of alkaline phosphatase, type I collagen, osteopontin and osteocalcin. Acts directly as a pro-inflammatory factor in the lung through its ability to bind and activate tumor necrosis factor alpha receptor 1/TNFRSF1A. This chain is Immunoglobulin G-binding protein A (spa), found in Staphylococcus aureus.